The primary structure comprises 60 residues: MDPCECTKSGTCNCGGSCTCTNCSCTSCKKSCCPCCPSGCTKCASGCVCKGKTCDTSCCQ.

A beta region spans residues 1-28 (MDPCECTKSGTCNCGGSCTCTNCSCTSC). Positions 4, 6, 12, 14, 18, 20, 23, 25, 28, 32, 33, 35, 36, 40, 43, 47, 49, 54, 58, and 59 each coordinate a divalent metal cation. The segment at 29–60 (KKSCCPCCPSGCTKCASGCVCKGKTCDTSCCQ) is alpha.

Belongs to the metallothionein superfamily. Type 1 family.

Metallothioneins have a high content of cysteine residues that bind various heavy metals. In Chaenocephalus aceratus (Blackfin icefish), this protein is Metallothionein B (mtb).